We begin with the raw amino-acid sequence, 128 residues long: Holo-[acyl-carrier-protein] synthase (128 aa).

Mg(2+)-binding residues include D9 and E60.

Belongs to the P-Pant transferase superfamily. AcpS family. Mg(2+) is required as a cofactor.

It localises to the cytoplasm. It carries out the reaction apo-[ACP] + CoA = holo-[ACP] + adenosine 3',5'-bisphosphate + H(+). Its function is as follows. Transfers the 4'-phosphopantetheine moiety from coenzyme A to a Ser of acyl-carrier-protein. The polypeptide is Holo-[acyl-carrier-protein] synthase (Buchnera aphidicola subsp. Baizongia pistaciae (strain Bp)).